A 144-amino-acid polypeptide reads, in one-letter code: Urease subunit beta (144 aa).

Over residues 110–119 (HAAPAAPAIP) the composition is skewed to low complexity. A disordered region spans residues 110–144 (HAAPAAPAIPARHESAAGDAPSPLKERAGFDNETR). Over residues 133–144 (LKERAGFDNETR) the composition is skewed to basic and acidic residues.

The protein belongs to the urease beta subunit family. As to quaternary structure, heterotrimer of UreA (gamma), UreB (beta) and UreC (alpha) subunits. Three heterotrimers associate to form the active enzyme.

It is found in the cytoplasm. It carries out the reaction urea + 2 H2O + H(+) = hydrogencarbonate + 2 NH4(+). The protein operates within nitrogen metabolism; urea degradation; CO(2) and NH(3) from urea (urease route): step 1/1. The sequence is that of Urease subunit beta from Micrococcus luteus (strain ATCC 4698 / DSM 20030 / JCM 1464 / CCM 169 / CCUG 5858 / IAM 1056 / NBRC 3333 / NCIMB 9278 / NCTC 2665 / VKM Ac-2230) (Micrococcus lysodeikticus).